Here is a 213-residue protein sequence, read N- to C-terminus: MIASVTGEVAFVGATLAVVEVSGFGIEVHASPRTLSGLRVGATTRLHTAYIARKDEAPLLFGFAQGDEKEIFTVMLGVSGVGPRTALAAVSVLGPEDARRAIAAGDDKAFTAVPGIGPKSARRIVLELADKLVLPEPPVQQANQPQVPVWRDQVVDALTGLGWSEKDAVRGIEDALQTQPELGDSGNVAEILRAVLSWLGTSKGTTHAPTGRR.

The interval 1–64 (MIASVTGEVA…DEAPLLFGFA (64 aa)) is domain I. Residues 65–143 (QGDEKEIFTV…LPEPPVQQAN (79 aa)) form a domain II region. The tract at residues 144 to 152 (QPQVPVWRD) is flexible linker. The segment at 152–213 (DQVVDALTGL…GTTHAPTGRR (62 aa)) is domain III.

It belongs to the RuvA family. In terms of assembly, homotetramer. Forms an RuvA(8)-RuvB(12)-Holliday junction (HJ) complex. HJ DNA is sandwiched between 2 RuvA tetramers; dsDNA enters through RuvA and exits via RuvB. An RuvB hexamer assembles on each DNA strand where it exits the tetramer. Each RuvB hexamer is contacted by two RuvA subunits (via domain III) on 2 adjacent RuvB subunits; this complex drives branch migration. In the full resolvosome a probable DNA-RuvA(4)-RuvB(12)-RuvC(2) complex forms which resolves the HJ.

The protein localises to the cytoplasm. In terms of biological role, the RuvA-RuvB-RuvC complex processes Holliday junction (HJ) DNA during genetic recombination and DNA repair, while the RuvA-RuvB complex plays an important role in the rescue of blocked DNA replication forks via replication fork reversal (RFR). RuvA specifically binds to HJ cruciform DNA, conferring on it an open structure. The RuvB hexamer acts as an ATP-dependent pump, pulling dsDNA into and through the RuvAB complex. HJ branch migration allows RuvC to scan DNA until it finds its consensus sequence, where it cleaves and resolves the cruciform DNA. The chain is Holliday junction branch migration complex subunit RuvA from Kocuria rhizophila (strain ATCC 9341 / DSM 348 / NBRC 103217 / DC2201).